The sequence spans 225 residues: Late embryogenesis abundant protein 29 (225 aa).

Disordered regions lie at residues 1 to 167 and 193 to 225; these read MASN…GGFL and TEEE…YQRK. 4 stretches are compositionally biased toward basic and acidic residues: residues 28-39, 49-61, 71-83, and 93-119; these read MRDKAEEGRDKT, KAHE…KDKT, KAHE…KEKT, and KAHE…KDKA. LEA 11-mer repeat repeat units follow at residues 53–63, 75–85, and 97–107; these read TAQSAKDKTSQ, TAQSAKEKTSQ, and TTQAAKEKTSQ. Polar residues predominate over residues 141–153; the sequence is TKETAQGAAQYTK. Over residues 154 to 163 the composition is skewed to basic and acidic residues; sequence ETAEAGRDKT. Positions 205-225 are enriched in low complexity; the sequence is TTTTTATTRTTDPTHQTYQRK.

It belongs to the LEA type 4 family.

It localises to the cytoplasm. The protein resides in the cytosol. Involved dehydration tolerance. The polypeptide is Late embryogenesis abundant protein 29 (Arabidopsis thaliana (Mouse-ear cress)).